Here is a 242-residue protein sequence, read N- to C-terminus: Large ribosomal subunit protein uL30y (242 aa).

Belongs to the universal ribosomal protein uL30 family.

The sequence is that of Large ribosomal subunit protein uL30y (RPL7B) from Arabidopsis thaliana (Mouse-ear cress).